The chain runs to 294 residues: Phosphatidylserine decarboxylase proenzyme (294 aa).

Residues aspartate 113, histidine 169, and serine 256 each act as charge relay system; for autoendoproteolytic cleavage activity in the active site. Serine 256 serves as the catalytic Schiff-base intermediate with substrate; via pyruvic acid; for decarboxylase activity. At serine 256 the chain carries Pyruvic acid (Ser); by autocatalysis.

Belongs to the phosphatidylserine decarboxylase family. PSD-B subfamily. Prokaryotic type II sub-subfamily. Heterodimer of a large membrane-associated beta subunit and a small pyruvoyl-containing alpha subunit. Pyruvate serves as cofactor. Post-translationally, is synthesized initially as an inactive proenzyme. Formation of the active enzyme involves a self-maturation process in which the active site pyruvoyl group is generated from an internal serine residue via an autocatalytic post-translational modification. Two non-identical subunits are generated from the proenzyme in this reaction, and the pyruvate is formed at the N-terminus of the alpha chain, which is derived from the carboxyl end of the proenzyme. The autoendoproteolytic cleavage occurs by a canonical serine protease mechanism, in which the side chain hydroxyl group of the serine supplies its oxygen atom to form the C-terminus of the beta chain, while the remainder of the serine residue undergoes an oxidative deamination to produce ammonia and the pyruvoyl prosthetic group on the alpha chain. During this reaction, the Ser that is part of the protease active site of the proenzyme becomes the pyruvoyl prosthetic group, which constitutes an essential element of the active site of the mature decarboxylase.

The protein localises to the cell membrane. It catalyses the reaction a 1,2-diacyl-sn-glycero-3-phospho-L-serine + H(+) = a 1,2-diacyl-sn-glycero-3-phosphoethanolamine + CO2. It functions in the pathway phospholipid metabolism; phosphatidylethanolamine biosynthesis; phosphatidylethanolamine from CDP-diacylglycerol: step 2/2. In terms of biological role, catalyzes the formation of phosphatidylethanolamine (PtdEtn) from phosphatidylserine (PtdSer). The polypeptide is Phosphatidylserine decarboxylase proenzyme (Clostridium perfringens (strain SM101 / Type A)).